The chain runs to 417 residues: Serine hydroxymethyltransferase (417 aa).

(6S)-5,6,7,8-tetrahydrofolate contacts are provided by residues Leu121 and 125–127 (GHL). Lys230 carries the post-translational modification N6-(pyridoxal phosphate)lysine. Glu245 serves as a coordination point for (6S)-5,6,7,8-tetrahydrofolate.

It belongs to the SHMT family. As to quaternary structure, homodimer. The cofactor is pyridoxal 5'-phosphate.

It is found in the cytoplasm. It carries out the reaction (6R)-5,10-methylene-5,6,7,8-tetrahydrofolate + glycine + H2O = (6S)-5,6,7,8-tetrahydrofolate + L-serine. Its pathway is one-carbon metabolism; tetrahydrofolate interconversion. It participates in amino-acid biosynthesis; glycine biosynthesis; glycine from L-serine: step 1/1. In terms of biological role, catalyzes the reversible interconversion of serine and glycine with tetrahydrofolate (THF) serving as the one-carbon carrier. This reaction serves as the major source of one-carbon groups required for the biosynthesis of purines, thymidylate, methionine, and other important biomolecules. Also exhibits THF-independent aldolase activity toward beta-hydroxyamino acids, producing glycine and aldehydes, via a retro-aldol mechanism. This chain is Serine hydroxymethyltransferase, found in Desulfitobacterium hafniense (strain DSM 10664 / DCB-2).